Consider the following 117-residue polypeptide: Ribosome-binding factor A (117 aa).

This sequence belongs to the RbfA family. Monomer. Binds 30S ribosomal subunits, but not 50S ribosomal subunits or 70S ribosomes.

The protein localises to the cytoplasm. In terms of biological role, one of several proteins that assist in the late maturation steps of the functional core of the 30S ribosomal subunit. Associates with free 30S ribosomal subunits (but not with 30S subunits that are part of 70S ribosomes or polysomes). Required for efficient processing of 16S rRNA. May interact with the 5'-terminal helix region of 16S rRNA. This is Ribosome-binding factor A from Leuconostoc mesenteroides subsp. mesenteroides (strain ATCC 8293 / DSM 20343 / BCRC 11652 / CCM 1803 / JCM 6124 / NCDO 523 / NBRC 100496 / NCIMB 8023 / NCTC 12954 / NRRL B-1118 / 37Y).